The primary structure comprises 3124 residues: Collagen alpha-1(XII) chain (3124 aa).

The signal sequence occupies residues 1 to 23 (MRTALCSAVAALCAAALLSSIEA). The Fibronectin type-III 1 domain occupies 27–117 (PPSDLNFTII…GQLTIQTGGP (91 aa)). A glycan (N-linked (GlcNAc...) asparagine) is linked at asparagine 32. Residues 139–311 (DLVFLVDGSW…DGIVDIQNEI (173 aa)) enclose the VWFA 1 domain. An O-linked (Xyl...) (chondroitin sulfate) serine glycan is attached at serine 328. The region spanning 335 to 424 (PASNLVATQI…ITIMEKTQQV (90 aa)) is the Fibronectin type-III 2 domain. The VWFA 2 domain occupies 439 to 615 (DVVFLVDGSY…RISFELTQSV (177 aa)). Fibronectin type-III domains follow at residues 633–722 (PAKN…LEVK), 724–815 (APRN…VRGN), 816–906 (PRNL…LEER), 908–998 (SPRN…VSQS), 999–1087 (ARTV…ASPF), and 1089–1179 (PPRN…TLSD). Serine 797, serine 890, and serine 981 each carry an O-linked (Xyl...) (chondroitin sulfate) serine glycan. 3 N-linked (GlcNAc...) asparagine glycosylation sites follow: asparagine 1006, asparagine 1032, and asparagine 1044. The segment at 1075–1100 (KSRKAEGTTASPFKPPRNLRTSDSTM) is disordered. A VWFA 3 domain is found at 1199–1371 (DIVLLVDGSW…SFLASIGEDV (173 aa)). Fibronectin type-III domains are found at residues 1387–1476 (PPSN…YPLS), 1477–1568 (SVRN…LPLP), 1569–1659 (GPRG…VPSP), 1660–1756 (VNLR…TPAP), 1759–1853 (GPRN…TVKN), 1854–1939 (MLVY…LERG), 1940–2030 (TPRN…LPRS), 2031–2121 (GPRN…VGLL), 2122–2210 (PPQN…LYLN), and 2211–2299 (VTDL…LKPT). Asparagine 1512 carries N-linked (GlcNAc...) asparagine glycosylation. Asparagine 1767 is a glycosylation site (N-linked (GlcNAc...) asparagine). N-linked (GlcNAc...) asparagine glycans are attached at residues asparagine 2210 and asparagine 2273. One can recognise a VWFA 4 domain in the interval 2327–2500 (DIVFLTDASW…DAFEKIQDNL (174 aa)). The interval 2455 to 2750 (SGFSVFVVGV…NACTCTQDSV (296 aa)) is nonhelical region (NC3). The region spanning 2524–2716 (GFKMLESYNL…IQNFDIVCSP (193 aa)) is the Laminin G-like domain. 2 N-linked (GlcNAc...) asparagine glycosylation sites follow: asparagine 2532 and asparagine 2683. Disordered regions lie at residues 2749-2900 (SVGP…GDRG) and 2935-3080 (PNDY…EGEP). Collagen-like domains follow at residues 2751-2802 (GPPG…GPNG), 2807-2858 (GEPG…GPRG), and 2859-2900 (PPGP…GDRG). A triple-helical region (COL2) with 1 imperfection region spans residues 2751–2902 (GPPGPPGPPG…KGEKGDRGDI (152 aa)). 2 stretches are compositionally biased toward pro residues: residues 2752-2761 (PPGPPGPPGG) and 2788-2798 (PPGPQGPPGPQ). Positions 2821–2830 (PGLPGRSGTP) are enriched in low complexity. Over residues 2832 to 2841 (LPGPPGPVGP) the composition is skewed to pro residues. Low complexity-rich tracts occupy residues 2842–2854 (PGERGFTGKDGPT) and 2865–2878 (APGVPGVAGPSGKP). The Cell attachment site motif lies at 2899–2901 (RGD). The tract at residues 2903-2945 (ASQNMMRAVARQVCEQLINGQMSRFNQMLNQIPNDYYSNRNQP) is nonhelical region (NC2). Polar residues predominate over residues 2935-2944 (PNDYYSNRNQ). Residues 2945-2954 (PGPPGPPGPP) are compositionally biased toward pro residues. Residues 2945–2994 (PGPPGPPGPPGAAGTRGEPGPGGRPGFPGPPGVQGPPGERGMPGEKGERG) enclose the Collagen-like 4 domain. A triple-helical region (COL1) with 2 imperfections region spans residues 2946–3048 (GPPGPPGPPG…RGPPGPPGYC (103 aa)). Residues 2961 to 2970 (GEPGPGGRPG) are compositionally biased toward gly residues. Over residues 3010-3024 (QGESRTGPPGSTGSR) the composition is skewed to low complexity. The interval 3049 to 3124 (DSSQCASIPY…SLSRKAKRKP (76 aa)) is nonhelical region (NC1).

It belongs to the fibril-associated collagens with interrupted helices (FACIT) family. In terms of assembly, trimer of identical chains each containing 190 kDa of non-triple-helical sequences. In terms of processing, the triple-helical tail is stabilized by disulfide bonds at each end. Post-translationally, prolines at the third position of the tripeptide repeating unit (G-X-Y) are hydroxylated in some or all of the chains. O-glycosylated; glycosaminoglycan of chondroitin-sulfate type. In terms of tissue distribution, type XII collagen is present in tendons, ligaments, perichondrium, and periosteum, all dense connective tissues containing type I collagen.

The protein resides in the secreted. It is found in the extracellular space. The protein localises to the extracellular matrix. In terms of biological role, type XII collagen interacts with type I collagen-containing fibrils, the COL1 domain could be associated with the surface of the fibrils, and the COL2 and NC3 domains may be localized in the perifibrillar matrix. This chain is Collagen alpha-1(XII) chain (COL12A1), found in Gallus gallus (Chicken).